Reading from the N-terminus, the 127-residue chain is Protein translocase subunit SecE (127 aa).

A run of 3 helical transmembrane segments spans residues 17–37 (VKWISISIFFILSFFINMCFY), 41–61 (LFIRIFIISCLMLCAIGTMIY), and 95–115 (FIVISVTIFISFILWSIDSVI).

This sequence belongs to the SecE/SEC61-gamma family. As to quaternary structure, component of the Sec protein translocase complex. Heterotrimer consisting of SecY, SecE and SecG subunits. The heterotrimers can form oligomers, although 1 heterotrimer is thought to be able to translocate proteins. Interacts with the ribosome. Interacts with SecDF, and other proteins may be involved. Interacts with SecA.

The protein localises to the cell inner membrane. Functionally, essential subunit of the Sec protein translocation channel SecYEG. Clamps together the 2 halves of SecY. May contact the channel plug during translocation. The protein is Protein translocase subunit SecE of Buchnera aphidicola subsp. Acyrthosiphon pisum (strain APS) (Acyrthosiphon pisum symbiotic bacterium).